Here is a 902-residue protein sequence, read N- to C-terminus: Protein translocase subunit SecA (902 aa).

Residues glutamine 87, 105 to 109, and aspartate 512 contribute to the ATP site; that span reads GEGKT. The interval 851–902 is disordered; the sequence is LARQQQLSHQAPVEELTQGSAAAAQEGRKVGRNDPCPCGSGKKFKHCHGKLQ. Residues cysteine 886, cysteine 888, cysteine 897, and histidine 898 each contribute to the Zn(2+) site. Residues 892–902 are compositionally biased toward basic residues; it reads KKFKHCHGKLQ.

The protein belongs to the SecA family. Monomer and homodimer. Part of the essential Sec protein translocation apparatus which comprises SecA, SecYEG and auxiliary proteins SecDF-YajC and YidC. Zn(2+) is required as a cofactor.

The protein resides in the cell inner membrane. It localises to the cytoplasm. The enzyme catalyses ATP + H2O + cellular proteinSide 1 = ADP + phosphate + cellular proteinSide 2.. Functionally, part of the Sec protein translocase complex. Interacts with the SecYEG preprotein conducting channel. Has a central role in coupling the hydrolysis of ATP to the transfer of proteins into and across the cell membrane, serving both as a receptor for the preprotein-SecB complex and as an ATP-driven molecular motor driving the stepwise translocation of polypeptide chains across the membrane. The chain is Protein translocase subunit SecA from Sodalis glossinidius (strain morsitans).